Consider the following 349-residue polypeptide: Ribosome production factor 1 (349 aa).

Residues 1 to 105 (MAKAGDKSSS…APPKPVPKTI (105 aa)) are disordered. Positions 87–97 (KEREALGDKAP) are enriched in basic and acidic residues. The 184-residue stretch at 142–325 (PKILITTSDR…LRSLQKGTFD (184 aa)) folds into the Brix domain. Residues 303–320 (VGIQELGPRFTLKLRSLQ) are RNA-binding.

Its subcellular location is the nucleus. It is found in the nucleolus. Its function is as follows. May be required for ribosome biogenesis. In Pongo abelii (Sumatran orangutan), this protein is Ribosome production factor 1 (RPF1).